The chain runs to 272 residues: uncharacterized protein (272 aa).

The region spanning 1-27 is the HTH merR-type domain; it reads MDTLAFINRALVEEGYSLKDIKLVLIT.

This is an uncharacterized protein from Aquifex aeolicus (strain VF5).